The sequence spans 145 residues: D-aminoacyl-tRNA deacylase (145 aa).

The short motif at Gly137–Pro138 is the Gly-cisPro motif, important for rejection of L-amino acids element.

Belongs to the DTD family. Homodimer.

It localises to the cytoplasm. It catalyses the reaction glycyl-tRNA(Ala) + H2O = tRNA(Ala) + glycine + H(+). The enzyme catalyses a D-aminoacyl-tRNA + H2O = a tRNA + a D-alpha-amino acid + H(+). In terms of biological role, an aminoacyl-tRNA editing enzyme that deacylates mischarged D-aminoacyl-tRNAs. Also deacylates mischarged glycyl-tRNA(Ala), protecting cells against glycine mischarging by AlaRS. Acts via tRNA-based rather than protein-based catalysis; rejects L-amino acids rather than detecting D-amino acids in the active site. By recycling D-aminoacyl-tRNA to D-amino acids and free tRNA molecules, this enzyme counteracts the toxicity associated with the formation of D-aminoacyl-tRNA entities in vivo and helps enforce protein L-homochirality. The chain is D-aminoacyl-tRNA deacylase from Pseudomonas syringae pv. tomato (strain ATCC BAA-871 / DC3000).